We begin with the raw amino-acid sequence, 319 residues long: Ribonucleoside-diphosphate reductase small chain (319 aa).

Fe cation-binding residues include aspartate 70, glutamate 101, and histidine 104. Residue tyrosine 108 is part of the active site. Glutamate 163, glutamate 197, and histidine 200 together coordinate Fe cation. Residues 313–319 are interaction with R1; that stretch reads FSLDVDF.

The protein belongs to the ribonucleoside diphosphate reductase small chain family. Interacts with RNR1/OPG080 subunit. Can interact with host RNR1 supunit. It depends on Fe cation as a cofactor.

It catalyses the reaction a 2'-deoxyribonucleoside 5'-diphosphate + [thioredoxin]-disulfide + H2O = a ribonucleoside 5'-diphosphate + [thioredoxin]-dithiol. In terms of biological role, ribonucleoside-diphosphate reductase holoenzyme provides the precursors necessary for viral DNA synthesis. Allows virus growth in non-dividing cells. Catalyzes the biosynthesis of deoxyribonucleotides from the corresponding ribonucleotides. The sequence is that of Ribonucleoside-diphosphate reductase small chain (OPG048) from Homo sapiens (Human).